The sequence spans 168 residues: Zinc finger A20 and AN1 domain-containing stress-associated protein 1 (168 aa).

The A20-type zinc finger occupies 13-47; sequence PSEPKLCVKGCGFFGSPSNMNLCSKCYRDIRATEE. Residues Cys-19, Cys-23, Cys-35, and Cys-38 each coordinate Zn(2+). The segment at 49–105 is disordered; that stretch reads TASAKAAVEKSLNPNKPKTQPQQSQEITQGVLGSGSSSSSTRGGDSAAAPLDPPKST. The span at 60–76 shows a compositional bias: polar residues; it reads LNPNKPKTQPQQSQEIT. The segment covering 82-94 has biased composition (low complexity); sequence SGSSSSSTRGGDS. The AN1-type zinc-finger motif lies at 103–149; sequence KSTATRCLSCNKKVGVTGFKCRCGSTFCGTHRYPESHECQFDFKGVA. Zn(2+) contacts are provided by Cys-109, Cys-112, Cys-123, Cys-125, Cys-130, His-133, His-139, and Cys-141.

Its function is as follows. May be involved in environmental stress response. This is Zinc finger A20 and AN1 domain-containing stress-associated protein 1 (SAP1) from Arabidopsis thaliana (Mouse-ear cress).